A 379-amino-acid polypeptide reads, in one-letter code: ATP phosphoribosyltransferase regulatory subunit (379 aa).

This sequence belongs to the class-II aminoacyl-tRNA synthetase family. HisZ subfamily. Heteromultimer composed of HisG and HisZ subunits.

The protein resides in the cytoplasm. The protein operates within amino-acid biosynthesis; L-histidine biosynthesis; L-histidine from 5-phospho-alpha-D-ribose 1-diphosphate: step 1/9. Functionally, required for the first step of histidine biosynthesis. May allow the feedback regulation of ATP phosphoribosyltransferase activity by histidine. The protein is ATP phosphoribosyltransferase regulatory subunit of Caldanaerobacter subterraneus subsp. tengcongensis (strain DSM 15242 / JCM 11007 / NBRC 100824 / MB4) (Thermoanaerobacter tengcongensis).